Consider the following 646-residue polypeptide: Macrolide export ATP-binding/permease protein MacB (646 aa).

Residues 5 to 243 form the ABC transporter domain; that stretch reads IELKGVSRTY…TLPKTNRIRQ (239 aa). 41–48 contacts ATP; it reads GASGSGKS. 4 consecutive transmembrane segments (helical) span residues 272–292, 518–538, 570–590, and 611–631; these read TLTM…VALG, FSIL…IGVM, IIEA…LSYI, and AAVA…YLPA.

It belongs to the ABC transporter superfamily. Macrolide exporter (TC 3.A.1.122) family. Homodimer. Part of the tripartite efflux system MacAB-TolC, which is composed of an inner membrane transporter, MacB, a periplasmic membrane fusion protein, MacA, and an outer membrane component, TolC. The complex forms a large protein conduit and can translocate molecules across both the inner and outer membranes. Interacts with MacA.

Its subcellular location is the cell inner membrane. In terms of biological role, part of the tripartite efflux system MacAB-TolC. MacB is a non-canonical ABC transporter that contains transmembrane domains (TMD), which form a pore in the inner membrane, and an ATP-binding domain (NBD), which is responsible for energy generation. Confers resistance against macrolides. This Escherichia coli protein is Macrolide export ATP-binding/permease protein MacB.